Reading from the N-terminus, the 355-residue chain is MATLNPFDLLDDDAEDPSQLAVAIEKIDKSKKSGQVSSLPAKSAPKLPSKPLPPAQAVREARSDAPRGGGGRGGFNRGRGGYNRDDGNNGYSGGYTKPSGEGDVSKSSYERRGGGGAPRGSFRGEGGGPGGGRRGGFSNEGGDGERPRRAFERRSGTGRGSDFKRDGSGRGNWGTPGEEIAAETEAVAGVETEKDVGEKPAVDDVAADANKEDTVVEEKEPEDKEMTLDEYEKILEEKKKALQSLTTSERKVDTKVFESMQQLSNKKSNDEIFIKLGSDKDKRKDDKEEKAKKAVSINEFLKPAEGGNYYRGGRGGRGRGGRGRGGVSSGESGGYRNEAAPAIGDAAQFPSLGGK.

Residue alanine 2 is modified to N-acetylalanine. A disordered region spans residues 26–225 (KIDKSKKSGQ…VEEKEPEDKE (200 aa)). Over residues 37–47 (SSLPAKSAPKL) the composition is skewed to low complexity. 2 stretches are compositionally biased toward gly residues: residues 67–81 (RGGGGRGGFNRGRGG) and 114–141 (GGGAPRGSFRGEGGGPGGGRRGGFSNEG). Residues 132 to 139 (GRRGGFSN) carry the Nuclear localization signal motif. The segment covering 143 to 168 (DGERPRRAFERRSGTGRGSDFKRDGS) has biased composition (basic and acidic residues). Positions 145–155 (ERPRRAFERRS) match the Arginine-rich RNA-binding motif E-R-P-R-R-X-[F/Y]-[E/D]-R-R-S motif. Low complexity predominate over residues 177–190 (GEEIAAETEAVAGV). 2 stretches are compositionally biased toward basic and acidic residues: residues 191-202 (ETEKDVGEKPAV) and 209-225 (ANKEDTVVEEKEPEDKE). Residues 234-289 (ILEEKKKALQSLTTSERKVDTKVFESMQQLSNKKSNDEIFIKLGSDKDKRKDDKEE) enclose the FF domain. Serine 268 carries the post-translational modification Phosphoserine. Residues 277–292 (GSDKDKRKDDKEEKAK) are compositionally biased toward basic and acidic residues. Residues 277-355 (GSDKDKRKDD…AAQFPSLGGK (79 aa)) form a disordered region. Gly residues predominate over residues 323–333 (GRGGVSSGESG). Residue serine 351 is modified to Phosphoserine.

The protein belongs to the SERBP1-HABP4 family. In terms of tissue distribution, expressed in seedlings, leaves, roots, inflorescences, and siliques. Constitutively expressed in seedlings and roots.

It localises to the cytoplasm. Its subcellular location is the perinuclear region. The protein resides in the nucleus. Its function is as follows. Ribosome-binding protein that acts as a regulator of mRNA translation by promoting ribosome inactivation. Binds RNA. Regulates responses to abscisic acid (ABA). Promotes stomata closure in drought conditions. Involved in resistance to salt and drought stresses via the accumulation of Pro. This Arabidopsis thaliana (Mouse-ear cress) protein is RGG repeats nuclear RNA binding protein A.